Reading from the N-terminus, the 397-residue chain is MALNFNAIASKSQKLPCFALPPKATLRSPKFSMISTIPSGSKEVGNLKKPFTPPKEVPVQITHSMPPHKIEIFKSLEGWAENNILTHLKPVEKCWQPADFLPDPNSDGFHEQVKELRERAKEIPDDYFVVLVGDMITEEALSTYQTMLNTLDGTRDETGASLTPWAIWTRAWTAEENRHGDLLNKYLYLSGRVDMRQIERTIQYLIGSGMDPHTENSPYRGFIYTSFQERATFISHGNTGRLAKEYGDINLAQICGSIASDEKRHETAYTKIVEKLFEIDPDETVLAFADMMKKKIAMPAEFIYDGRDYNLFDHYSAVAQRIGVYTAKDYVDIVEHLVDRWKVKELAGLSAEGRKAQDYLCSLPSRIRRLEERAQEKAQGSTPVSPFSWIFDREVKL.

The transit peptide at methionine 1–methionine 33 directs the protein to the chloroplast. 6 residues coordinate Fe cation: glutamate 138, glutamate 176, histidine 179, glutamate 229, glutamate 262, and histidine 265.

This sequence belongs to the fatty acid desaturase type 2 family. Homodimer. Requires Fe(2+) as cofactor.

It is found in the plastid. The protein resides in the chloroplast. It catalyses the reaction octadecanoyl-[ACP] + 2 reduced [2Fe-2S]-[ferredoxin] + O2 + 2 H(+) = (9Z)-octadecenoyl-[ACP] + 2 oxidized [2Fe-2S]-[ferredoxin] + 2 H2O. It participates in lipid metabolism; fatty acid metabolism. In terms of biological role, converts stearoyl-ACP to oleoyl-ACP by introduction of a cis double bond between carbons 9 and 10 of the acyl chain. This is Stearoyl-[acyl-carrier-protein] 9-desaturase, chloroplastic from Gossypium hirsutum (Upland cotton).